A 166-amino-acid polypeptide reads, in one-letter code: Transcription antitermination protein NusB (166 aa).

Positions M1–D18 are enriched in basic and acidic residues. The interval M1–E30 is disordered.

It belongs to the NusB family.

In terms of biological role, involved in transcription antitermination. Required for transcription of ribosomal RNA (rRNA) genes. Binds specifically to the boxA antiterminator sequence of the ribosomal RNA (rrn) operons. This Pseudomonas entomophila (strain L48) protein is Transcription antitermination protein NusB.